The following is a 451-amino-acid chain: Glyceraldehyde-3-phosphate dehydrogenase B, chloroplastic (451 aa).

The segment at 1 to 25 (MATHAALASTRIPTNTRFPSKTSHS) is disordered. Residues 1-84 (MATHAALAST…STAVKGVTVA (84 aa)) constitute a chloroplast transit peptide. Over residues 11–25 (RIPTNTRFPSKTSHS) the composition is skewed to polar residues. Residues 95–96 (RI), D119, and R164 each bind NADP(+). D-glyceraldehyde 3-phosphate-binding positions include 238 to 240 (SCT), T269, R284, 297 to 298 (TG), and R320. The active-site Nucleophile is the C239. N403 lines the NADP(+) pocket.

This sequence belongs to the glyceraldehyde-3-phosphate dehydrogenase family. In terms of assembly, tetramer of either four A chains (GAPDH 2) or two A and two B chains (GAPDH 1).

The protein resides in the plastid. The protein localises to the chloroplast. It catalyses the reaction D-glyceraldehyde 3-phosphate + phosphate + NADP(+) = (2R)-3-phospho-glyceroyl phosphate + NADPH + H(+). Its pathway is carbohydrate biosynthesis; Calvin cycle. The protein is Glyceraldehyde-3-phosphate dehydrogenase B, chloroplastic (GAPB) of Pisum sativum (Garden pea).